Consider the following 222-residue polypeptide: MIFNKVIERISILKNRCRSSECSIIGVLFRMLMFRLVYKKNILTSPKVKIKNIKNIKFNKNSNLIVGLSNVNHVNNNSICYINNRGEMHVSGNVFIAKSVRVDIADSSKIILNDCYIGPETDLISYSGISIGKGSMVSWRVQFLDEDFHLVSYNDKKPKDGKITIGENCLIGNNVAINKGCIIADGCVVASHSVVNGVFLEKNCLIAGVPARVIKRNISWQH.

This is an uncharacterized protein from Klebsiella pneumoniae.